We begin with the raw amino-acid sequence, 289 residues long: Inorganic pyrophosphatase (289 aa).

The residue at position 2 (Ser-2) is an N-acetylserine. Lys-57 bears the N6-acetyllysine mark. Mg(2+) contacts are provided by Asp-116, Asp-121, and Asp-153. Lys-228 is subject to N6-acetyllysine. A Phosphoserine modification is found at Ser-250.

The protein belongs to the PPase family. As to quaternary structure, homodimer. Mg(2+) is required as a cofactor.

It is found in the cytoplasm. The catalysed reaction is diphosphate + H2O = 2 phosphate + H(+). The protein is Inorganic pyrophosphatase (PPA1) of Pongo abelii (Sumatran orangutan).